The sequence spans 1395 residues: DNA polymerase II large subunit (1395 aa).

Disordered regions lie at residues 279 to 320 (IGKD…PRVE) and 657 to 704 (GNRM…MSDT). Over residues 283-312 (EADEGDSAEDANGDDAGEGADDDGGDEADE) the composition is skewed to acidic residues. Composition is skewed to basic and acidic residues over residues 661–671 (GRPEKSERRDL) and 690–700 (DVAKATKHADD).

It belongs to the archaeal DNA polymerase II family. Heterodimer of a large subunit and a small subunit. Post-translationally, this protein undergoes a protein self splicing that involves a post-translational excision of the intervening region (intein) followed by peptide ligation.

The catalysed reaction is DNA(n) + a 2'-deoxyribonucleoside 5'-triphosphate = DNA(n+1) + diphosphate. It catalyses the reaction Exonucleolytic cleavage in the 3'- to 5'-direction to yield nucleoside 5'-phosphates.. Its function is as follows. Possesses two activities: a DNA synthesis (polymerase) and an exonucleolytic activity that degrades single-stranded DNA in the 3'- to 5'-direction. Has a template-primer preference which is characteristic of a replicative DNA polymerase. The polypeptide is DNA polymerase II large subunit (Haloarcula marismortui (strain ATCC 43049 / DSM 3752 / JCM 8966 / VKM B-1809) (Halobacterium marismortui)).